A 206-amino-acid polypeptide reads, in one-letter code: Small ribosomal subunit protein uS4 (206 aa).

An S4 RNA-binding domain is found at G96–K156.

This sequence belongs to the universal ribosomal protein uS4 family. Part of the 30S ribosomal subunit. Contacts protein S5. The interaction surface between S4 and S5 is involved in control of translational fidelity.

Functionally, one of the primary rRNA binding proteins, it binds directly to 16S rRNA where it nucleates assembly of the body of the 30S subunit. Its function is as follows. With S5 and S12 plays an important role in translational accuracy. This chain is Small ribosomal subunit protein uS4, found in Enterobacter sp. (strain 638).